The following is an 865-amino-acid chain: Leucine--tRNA ligase (865 aa).

The 'HIGH' region motif lies at 58-68; it reads PYPSGNLHMGH. The 'KMSKS' region motif lies at 629–633; the sequence is KMSKS. Lys-632 contributes to the ATP binding site.

The protein belongs to the class-I aminoacyl-tRNA synthetase family.

It is found in the cytoplasm. It catalyses the reaction tRNA(Leu) + L-leucine + ATP = L-leucyl-tRNA(Leu) + AMP + diphosphate. The polypeptide is Leucine--tRNA ligase (Synechococcus elongatus (strain ATCC 33912 / PCC 7942 / FACHB-805) (Anacystis nidulans R2)).